The sequence spans 92 residues: Muconolactone Delta-isomerase (92 aa).

It belongs to the muconolactone Delta-isomerase family. In terms of assembly, homodecamer.

The enzyme catalyses (S)-muconolactone = (4,5-dihydro-5-oxofuran-2-yl)-acetate. It participates in aromatic compound metabolism; beta-ketoadipate pathway; 5-oxo-4,5-dihydro-2-furylacetate from catechol: step 3/3. The polypeptide is Muconolactone Delta-isomerase (catC) (Cupriavidus pinatubonensis (strain JMP 134 / LMG 1197) (Cupriavidus necator (strain JMP 134))).